A 427-amino-acid polypeptide reads, in one-letter code: MNNLEIFEESKKYMPGGVNSPVRCFKEMGMNPPVIKSGKGVIIKDEDGKEYIDFVLAWGPLLLGHCDEDVVKAIKETSENALAFGAPTKLELELSKFMCENLDNVDMIRMVNSGTEATMSAVKLARGYTGKSKIVKFAGCYHGHFDGFLIEAGSGVLTEGIPGSLGVPKESVENTLIGLYNDKTQIKELFKKQGNEIAAVIIEPVAGNMGVIKANEDFIKELRSLCDEYGALLIFDEVMTGFRVAFKGAQTLFDIKPDLITYAKIMGGGLPCGAYAGKKEIMEKLSPCGGVYQAGTMSGNPVVMSAGLATLTKLKNNIELYDHVEKIGEKLQEGLIKISKENDVPLIINRVGGMLTLFFTELEKVNTYEDVKTCDNERFKRYFKHMLNEGFNIAPSQFEAMFLSVKHTEEHIDKFLDAFKRFAINEK.

Lys264 carries the post-translational modification N6-(pyridoxal phosphate)lysine.

Belongs to the class-III pyridoxal-phosphate-dependent aminotransferase family. HemL subfamily. As to quaternary structure, homodimer. Pyridoxal 5'-phosphate is required as a cofactor.

The protein localises to the cytoplasm. It catalyses the reaction (S)-4-amino-5-oxopentanoate = 5-aminolevulinate. It participates in porphyrin-containing compound metabolism; protoporphyrin-IX biosynthesis; 5-aminolevulinate from L-glutamyl-tRNA(Glu): step 2/2. In Clostridium botulinum (strain Eklund 17B / Type B), this protein is Glutamate-1-semialdehyde 2,1-aminomutase.